The following is a 446-amino-acid chain: Butyryl-CoA:acetate CoA-transferase (446 aa).

220-224 is a CoA binding site; the sequence is GIGGM. The active-site 5-glutamyl coenzyme A thioester intermediate is the glutamate 245. CoA is bound by residues valine 320, glycine 343, and lysine 370.

The protein belongs to the acetyl-CoA hydrolase/transferase family. Butyryl-CoA CoA-transferase subfamily.

It catalyses the reaction butanoate + acetyl-CoA = butanoyl-CoA + acetate. The enzyme catalyses propanoate + acetyl-CoA = propanoyl-CoA + acetate. It functions in the pathway lipid metabolism; butanoate metabolism. Its function is as follows. Coenzyme A-transferase that converts butyryl-CoA to butyrate. Can also use proprionyl-CoA as substrate in vitro. The chain is Butyryl-CoA:acetate CoA-transferase from Anaerostipes caccae (strain DSM 14662 / CCUG 47493 / JCM 13470 / NCIMB 13811 / L1-92).